The following is a 177-amino-acid chain: MSRVAKAPVVLPAGVEVKLNGQEITIKGGKGELTRVLNNAVVVSQEDNSIVFGPREGVANAWAQAGTARALVNNMVVGVNEGFTKKLTLKGVGYRATMKGNAVGLTLGFSHPVEHALPEGIKAECPTQTEIIITGCDKQVVGQVAADIRSYRKPEPYKGKGVRYADEIVRTKEAKKK.

The protein belongs to the universal ribosomal protein uL6 family. Part of the 50S ribosomal subunit.

Functionally, this protein binds to the 23S rRNA, and is important in its secondary structure. It is located near the subunit interface in the base of the L7/L12 stalk, and near the tRNA binding site of the peptidyltransferase center. This chain is Large ribosomal subunit protein uL6, found in Aliivibrio salmonicida (strain LFI1238) (Vibrio salmonicida (strain LFI1238)).